Here is a 757-residue protein sequence, read N- to C-terminus: MTTFHVLGFPRVGAKRELKFAQERYWRKELAEQDLLDLAKALREKNWKHQADANADFMAVGDFTFYDHILDLQVATGAIPARFGFDSKNLTLDQYFQLARGNKDQFAIEMTKWFDTNYHYLVPEFHKDTQFKANPTHYVNQIREAKVAGHQVKPVIVGPLTFLWLGKEKGESFNRFELLAQLVPVYVEILNALVAEGTEWIQIDEPALAVDLPKEWVNAYKDVYATLSEKVNAKLLLATYFGSVTEHATLLKELPVDGLHLDLVRAPEQLVAFEDYNKVLSAGVIDGRNIWRANLNTVLDVLEPLKEKLGERLWIAPSCSLLHTPFDLNVETQLQENNPALYSWLAFTLQKVQELSVLKTALEKGRNAVNVELDASQVAADARANSKEIHRPEVAERLANLPKNADQRKSPFGERIKLQNAWLNLPLLPTTSIGSFPQTTEIRRARAAFKKGDLSLEEYENSMKKEIELVVREQEKLDLDVLVHGEPERNDMVEYFGELLDGFAFTKFGWVQSYGSRCVKPPVIYGDVVRPEPMTVRWSKYAQSLTKKVMKGMLTGPVTILQWSFVRNDIPRSTVCKQIGVALSDEVLDLEKAGIKVIQIDEPAIREGLPLKRADWDTYLQWAGEAFRLSSMGVADDTQIHTHMCYSEFNDILPAIAALDADVITIETSRSDMELLTAFGDFKYPNDIGPGVYDIHSPRVPTAEEIEHLLRKALNVVPKERLWVNPDCGLKTRGWSETIAQLEVMMSVTKKLRAELA.

Residues 16–19 (RELK) and Lys-112 contribute to the 5-methyltetrahydropteroyltri-L-glutamate site. L-homocysteine is bound by residues 433–435 (IGS) and Glu-486. Residues 433–435 (IGS) and Glu-486 each bind L-methionine. 5-methyltetrahydropteroyltri-L-glutamate-binding positions include 517-518 (RC) and Trp-563. Asp-601 is an L-homocysteine binding site. L-methionine is bound at residue Asp-601. Glu-607 is a 5-methyltetrahydropteroyltri-L-glutamate binding site. Zn(2+)-binding residues include His-643, Cys-645, and Glu-667. His-696 (proton donor) is an active-site residue. Residue Cys-728 participates in Zn(2+) binding.

The protein belongs to the vitamin-B12 independent methionine synthase family. Requires Zn(2+) as cofactor.

The catalysed reaction is 5-methyltetrahydropteroyltri-L-glutamate + L-homocysteine = tetrahydropteroyltri-L-glutamate + L-methionine. Its pathway is amino-acid biosynthesis; L-methionine biosynthesis via de novo pathway; L-methionine from L-homocysteine (MetE route): step 1/1. Catalyzes the transfer of a methyl group from 5-methyltetrahydrofolate to homocysteine resulting in methionine formation. The protein is 5-methyltetrahydropteroyltriglutamate--homocysteine methyltransferase of Histophilus somni (strain 2336) (Haemophilus somnus).